The primary structure comprises 231 residues: Ion-translocating oxidoreductase complex subunit E (231 aa).

6 consecutive transmembrane segments (helical) span residues 18 to 38 (ALVQ…ATNA), 39 to 59 (LGLG…ISTL), 63 to 83 (TPAE…VSAV), 86 to 106 (LINA…PLIV), 125 to 145 (ALSA…MCVL), and 182 to 202 (PFLL…MLAG).

This sequence belongs to the NqrDE/RnfAE family. In terms of assembly, the complex is composed of six subunits: RsxA, RsxB, RsxC, RsxD, RsxE and RsxG.

It is found in the cell inner membrane. Its function is as follows. Part of a membrane-bound complex that couples electron transfer with translocation of ions across the membrane. Required to maintain the reduced state of SoxR. The sequence is that of Ion-translocating oxidoreductase complex subunit E from Escherichia coli (strain SMS-3-5 / SECEC).